The chain runs to 267 residues: GTP cyclohydrolase MptA (267 aa).

It belongs to the GTP cyclohydrolase IV family. In terms of assembly, homodimer. It depends on Fe(2+) as a cofactor.

It catalyses the reaction GTP + H2O = 7,8-dihydroneopterin 2',3'-cyclic phosphate + formate + diphosphate + H(+). It participates in cofactor biosynthesis; 5,6,7,8-tetrahydromethanopterin biosynthesis. Its function is as follows. Converts GTP to 7,8-dihydro-D-neopterin 2',3'-cyclic phosphate, the first intermediate in the biosynthesis of coenzyme methanopterin. This is GTP cyclohydrolase MptA from Pyrococcus furiosus (strain ATCC 43587 / DSM 3638 / JCM 8422 / Vc1).